The primary structure comprises 67 residues: UPF0434 protein Reut_A0592 (67 aa).

It belongs to the UPF0434 family.

In Cupriavidus pinatubonensis (strain JMP 134 / LMG 1197) (Cupriavidus necator (strain JMP 134)), this protein is UPF0434 protein Reut_A0592.